Reading from the N-terminus, the 277-residue chain is Alpha-ketoglutarate-dependent dioxygenase tstK (277 aa).

This sequence belongs to the asaB hydroxylase/desaturase family.

The catalysed reaction is 2-[(1R,8S,14R,15R)-11-hydroxy-14,15-bis[(6E)-oct-6-en-1-yl]-3,5,9-trioxo-4,10-dioxatetracyclo[9.4.0.0(2,6).0(8,12)]pentadeca-2(6),12-dien-8-yl]acetate + 3 2-oxoglutarate + 3 O2 = phomoidride A + 3 succinate + 3 CO2 + H2O. Its function is as follows. Alpha-ketoglutarate-dependent dioxygenase; part of the gene cluster that mediates the biosynthesis of the antihypercholesterolemic agents phomoidrides which are dimeric anhydrides. Within the pathway, tstK is responsible for the iterative oxidation necessary to convert prephomoidride to phomoidride A. The pathway begins with the highly reducing polyketide synthase tstiA that catalyzes the formation of a C12-fatty acyl-ACP, starting from one acetate and 5 malonate units. The hydrolase tstM is involved in the release of the C12-fatty acyl chain from phiA. The alkylcitrate synthase (ACS) tstJ and the alkylcitrate dehydratase (ACDH) tstI then give rise to decarboxylated monomeric anhydrides by coupling the C12-fatty acyl chain with oxalacetic acid. The cyclase tstC is responsible for the dimerization of the monomeric anhydrides which leads to the production of prephomoidride that contains the characteristic bicyclo[4.3.1]deca-1,6-diene system of phomoidrides. Iterative oxidation catalyzed by the alpha-ketoglutarate-dependent dioxygenase tstK produced then phomoidride A. Finally, the methyltransferase tstE converts phomoidride A to phomoidride B via an acetalization reaction. The phosphatidylethanolamine-binding protein tstB and tstN are not essential for dimerization and their functions have still to be determined. This Talaromyces stipitatus (strain ATCC 10500 / CBS 375.48 / QM 6759 / NRRL 1006) (Penicillium stipitatum) protein is Alpha-ketoglutarate-dependent dioxygenase tstK.